A 96-amino-acid chain; its full sequence is Co-chaperonin GroES (96 aa).

The protein belongs to the GroES chaperonin family. In terms of assembly, heptamer of 7 subunits arranged in a ring. Interacts with the chaperonin GroEL.

It is found in the cytoplasm. Its function is as follows. Together with the chaperonin GroEL, plays an essential role in assisting protein folding. The GroEL-GroES system forms a nano-cage that allows encapsulation of the non-native substrate proteins and provides a physical environment optimized to promote and accelerate protein folding. GroES binds to the apical surface of the GroEL ring, thereby capping the opening of the GroEL channel. This Shewanella sediminis (strain HAW-EB3) protein is Co-chaperonin GroES.